The primary structure comprises 222 residues: MGQKVHPKGFRLGIIRDWDSRWFANDKDFEKYVLEDYKIRRHIKEKLYNAGISRIEIERAAKRVKVIIHTAKPGIVIGRAGSGVEALRKELEKLTGGKTISLDIKEIKVPELDAQLVAENIAAQLEKRVSFRKAMKQAMARALRSGAKGIKTMVSGRLGGADIARTEWYKEGRIPLQTLRADIDYGFAEAHTTYGRIGVKTWIYKGDILPQKAAASEKGGDK.

The 70-residue stretch at 39-108 folds into the KH type-2 domain; it reads IRRHIKEKLY…TISLDIKEIK (70 aa).

This sequence belongs to the universal ribosomal protein uS3 family. As to quaternary structure, part of the 30S ribosomal subunit. Forms a tight complex with proteins S10 and S14.

Functionally, binds the lower part of the 30S subunit head. Binds mRNA in the 70S ribosome, positioning it for translation. This chain is Small ribosomal subunit protein uS3, found in Caldicellulosiruptor bescii (strain ATCC BAA-1888 / DSM 6725 / KCTC 15123 / Z-1320) (Anaerocellum thermophilum).